Reading from the N-terminus, the 126-residue chain is Cystatin-like cysteine protease inhibitor EPIC1 (126 aa).

An N-terminal signal peptide occupies residues 1 to 21 (MTFLRPILALLAATALVTTSA). Residue asparagine 46 is glycosylated (N-linked (GlcNAc...) asparagine). The Secondary area of contact motif lies at 69 to 73 (QVVSG).

Belongs to the cystatin family. As to quaternary structure, interacts with the host papain-like cysteine protease RCR3. Interacts with the host papain-like cysteine protease C14.

It is found in the secreted. Its function is as follows. Secreted effector that interacts with and inhibits the pathogenesis-related papain-like cysteine proteases C14 and RCR3 of host plants. Inhibition of host proteases by a pathogen extracellular protease inhibitor forms a specific type of defense-counterdefense mechanism between plants and microbial pathogens. The protein is Cystatin-like cysteine protease inhibitor EPIC1 of Phytophthora infestans (Potato late blight agent).